The primary structure comprises 189 residues: Peptidyl-tRNA hydrolase (189 aa).

Residue Tyr-15 participates in tRNA binding. His-20 functions as the Proton acceptor in the catalytic mechanism. TRNA contacts are provided by Tyr-65, Asn-67, and Asn-113.

It belongs to the PTH family. Monomer.

It localises to the cytoplasm. It carries out the reaction an N-acyl-L-alpha-aminoacyl-tRNA + H2O = an N-acyl-L-amino acid + a tRNA + H(+). Functionally, hydrolyzes ribosome-free peptidyl-tRNAs (with 1 or more amino acids incorporated), which drop off the ribosome during protein synthesis, or as a result of ribosome stalling. In terms of biological role, catalyzes the release of premature peptidyl moieties from peptidyl-tRNA molecules trapped in stalled 50S ribosomal subunits, and thus maintains levels of free tRNAs and 50S ribosomes. This chain is Peptidyl-tRNA hydrolase, found in Caldicellulosiruptor saccharolyticus (strain ATCC 43494 / DSM 8903 / Tp8T 6331).